The chain runs to 338 residues: RNA 3'-terminal phosphate cyclase (338 aa).

Residues Q103 and 283-287 (YLADQ) contribute to the ATP site. The active-site Tele-AMP-histidine intermediate is H308.

The protein belongs to the RNA 3'-terminal cyclase family. Type 1 subfamily.

The protein localises to the cytoplasm. The enzyme catalyses a 3'-end 3'-phospho-ribonucleotide-RNA + ATP = a 3'-end 2',3'-cyclophospho-ribonucleotide-RNA + AMP + diphosphate. Functionally, catalyzes the conversion of 3'-phosphate to a 2',3'-cyclic phosphodiester at the end of RNA. The mechanism of action of the enzyme occurs in 3 steps: (A) adenylation of the enzyme by ATP; (B) transfer of adenylate to an RNA-N3'P to produce RNA-N3'PP5'A; (C) and attack of the adjacent 2'-hydroxyl on the 3'-phosphorus in the diester linkage to produce the cyclic end product. The biological role of this enzyme is unknown but it is likely to function in some aspects of cellular RNA processing. This is RNA 3'-terminal phosphate cyclase from Escherichia coli (strain K12 / MC4100 / BW2952).